We begin with the raw amino-acid sequence, 95 residues long: Aspartyl/glutamyl-tRNA(Asn/Gln) amidotransferase subunit C (95 aa).

It belongs to the GatC family. In terms of assembly, heterotrimer of A, B and C subunits.

The catalysed reaction is L-glutamyl-tRNA(Gln) + L-glutamine + ATP + H2O = L-glutaminyl-tRNA(Gln) + L-glutamate + ADP + phosphate + H(+). It catalyses the reaction L-aspartyl-tRNA(Asn) + L-glutamine + ATP + H2O = L-asparaginyl-tRNA(Asn) + L-glutamate + ADP + phosphate + 2 H(+). In terms of biological role, allows the formation of correctly charged Asn-tRNA(Asn) or Gln-tRNA(Gln) through the transamidation of misacylated Asp-tRNA(Asn) or Glu-tRNA(Gln) in organisms which lack either or both of asparaginyl-tRNA or glutaminyl-tRNA synthetases. The reaction takes place in the presence of glutamine and ATP through an activated phospho-Asp-tRNA(Asn) or phospho-Glu-tRNA(Gln). The polypeptide is Aspartyl/glutamyl-tRNA(Asn/Gln) amidotransferase subunit C (Magnetococcus marinus (strain ATCC BAA-1437 / JCM 17883 / MC-1)).